A 533-amino-acid chain; its full sequence is uncharacterized protein (533 aa).

Polar residues-rich tracts occupy residues 30-43 (SQQGQISESVVKNH), 79-91 (NAGTQSQNFTHLS), 231-247 (NVKSPVQQHRSFVSSSA), and 254-263 (GRQSNSPNSN). 2 disordered regions span residues 30-92 (SQQG…HLSA) and 221-274 (SLSP…PGAS). Phosphoserine is present on serine 336. Residues 475–510 (HPSLSNSAASPPVSSPGLRRSHIPVHEGLKHTRDGV) are disordered. Residues 476 to 490 (PSLSNSAASPPVSSP) show a composition bias toward low complexity. Positions 498 to 510 (PVHEGLKHTRDGV) are enriched in basic and acidic residues.

It is found in the nucleus. This is an uncharacterized protein from Schizosaccharomyces pombe (strain 972 / ATCC 24843) (Fission yeast).